A 137-amino-acid polypeptide reads, in one-letter code: Acidic phospholipase A2 CC-PLA2-1 (137 aa).

An N-terminal signal peptide occupies residues 1-16 (MRTLWIVAVWLMGVEG). Cystine bridges form between cysteine 42–cysteine 130, cysteine 44–cysteine 60, cysteine 59–cysteine 110, cysteine 65–cysteine 137, cysteine 66–cysteine 103, cysteine 73–cysteine 96, and cysteine 90–cysteine 101. Ca(2+) contacts are provided by tyrosine 43, glycine 45, and glycine 47. Histidine 63 is a catalytic residue. Aspartate 64 is a Ca(2+) binding site. Aspartate 104 is an active-site residue.

It belongs to the phospholipase A2 family. Group II subfamily. D49 sub-subfamily. Ca(2+) serves as cofactor. In terms of processing, glycosylated (2.5%). Expressed by the venom gland.

It is found in the secreted. The catalysed reaction is a 1,2-diacyl-sn-glycero-3-phosphocholine + H2O = a 1-acyl-sn-glycero-3-phosphocholine + a fatty acid + H(+). In terms of biological role, snake venom phospholipase A2 (PLA2) that inhibits blood coagulation and platelet aggregation induced by ADP and arachidonic acid. Inhibits tumor cell adhesion and migration in a dose-dependent manner. Abolishes the attachment of human brain microvascular endothelial cells (HBMEC) to fibrinogen (IC(50)=0.12 uM) and dramatically reduces its adhesion to fibronectin (IC(50)=0.12 uM), whereas no effect is observed on type I collagen, vitronectin or laminin 1. Also blocks the cell migration toward fibronectin and fibrinogen. These effects are not dependent of the catalytic activity, but are mediated by alpha-5/beta-1 (ITGA5/ITGB1) and alpha-v-containing (ITGAV) integrins. Also shows anti-angiogenic activity in chicken chorioallantoix membrane assay. Has a relatively high enzymatic activity. PLA2 catalyzes the calcium-dependent hydrolysis of the 2-acyl groups in 3-sn-phosphoglycerides. The chain is Acidic phospholipase A2 CC-PLA2-1 from Cerastes cerastes (Horned desert viper).